A 277-amino-acid polypeptide reads, in one-letter code: Proteasome assembly chaperone 1 (277 aa).

This sequence belongs to the PSMG1 family. Forms a heterodimer with psmg2. In terms of processing, degraded by the proteasome upon completion of 20S proteasome maturation.

The protein resides in the cytoplasm. The protein localises to the endoplasmic reticulum. Chaperone protein which promotes assembly of the 20S proteasome as part of a heterodimer with psmg2. The chain is Proteasome assembly chaperone 1 from Danio rerio (Zebrafish).